A 147-amino-acid chain; its full sequence is D-aminoacyl-tRNA deacylase (147 aa).

The short motif at 136–137 (GP) is the Gly-cisPro motif, important for rejection of L-amino acids element.

Belongs to the DTD family. In terms of assembly, homodimer.

It localises to the cytoplasm. It catalyses the reaction glycyl-tRNA(Ala) + H2O = tRNA(Ala) + glycine + H(+). It carries out the reaction a D-aminoacyl-tRNA + H2O = a tRNA + a D-alpha-amino acid + H(+). Functionally, an aminoacyl-tRNA editing enzyme that deacylates mischarged D-aminoacyl-tRNAs. Also deacylates mischarged glycyl-tRNA(Ala), protecting cells against glycine mischarging by AlaRS. Acts via tRNA-based rather than protein-based catalysis; rejects L-amino acids rather than detecting D-amino acids in the active site. By recycling D-aminoacyl-tRNA to D-amino acids and free tRNA molecules, this enzyme counteracts the toxicity associated with the formation of D-aminoacyl-tRNA entities in vivo and helps enforce protein L-homochirality. This is D-aminoacyl-tRNA deacylase from Streptococcus agalactiae serotype III (strain NEM316).